We begin with the raw amino-acid sequence, 554 residues long: Glucose-6-phosphate isomerase (554 aa).

Serine 2 is modified (N-acetylserine). Threonine 53 bears the Phosphothreonine mark. D-glucose 6-phosphate is bound by residues 168–169 (GS), 218–223 (SKTFTT), glutamine 363, glutamate 367, histidine 398, and lysine 520. The residue at position 220 (threonine 220) is a Phosphothreonine. The Proton donor role is filled by glutamate 367. Catalysis depends on residues histidine 398 and lysine 520.

The protein belongs to the GPI family. As to quaternary structure, homodimer.

The protein localises to the cytoplasm. It localises to the cytosol. The catalysed reaction is alpha-D-glucose 6-phosphate = beta-D-fructose 6-phosphate. It functions in the pathway carbohydrate degradation; glycolysis; D-glyceraldehyde 3-phosphate and glycerone phosphate from D-glucose: step 2/4. Its activity is regulated as follows. Strongly inhibited by the polyol (sugar alcohol) phosphate D-glucitol 6-phosphate (D-sorbitol 6-phosphate). Also inhibited by the polyol (sugar alcohol) phosphate D-ribitol 5-phosphate. Its function is as follows. In the cytoplasm, catalyzes the conversion of glucose-6-phosphate to fructose-6-phosphate, the second step in glycolysis, and the reverse reaction during gluconeogenesis. This Saccharomyces cerevisiae (strain ATCC 204508 / S288c) (Baker's yeast) protein is Glucose-6-phosphate isomerase (PGI1).